A 461-amino-acid polypeptide reads, in one-letter code: Argininosuccinate lyase (461 aa).

It belongs to the lyase 1 family. Argininosuccinate lyase subfamily. As to quaternary structure, homotetramer.

Its subcellular location is the cytoplasm. It carries out the reaction 2-(N(omega)-L-arginino)succinate = fumarate + L-arginine. The protein operates within amino-acid biosynthesis; L-arginine biosynthesis; L-arginine from L-ornithine and carbamoyl phosphate: step 3/3. The polypeptide is Argininosuccinate lyase (Nostoc punctiforme (strain ATCC 29133 / PCC 73102)).